The chain runs to 228 residues: Histidine/lysine/arginine/ornithine transport system permease protein HisQ (228 aa).

Over 1-12 the chain is Periplasmic; it reads MLYGFSGVILQG. A helical transmembrane segment spans residues 13–33; it reads AIVTLELALSSVVLAVLIGLV. In terms of domain architecture, ABC transmembrane type-1 spans 13-212; sequence AIVTLELALS…VFTTVSNGVL (200 aa). Residues 34-58 lie on the Cytoplasmic side of the membrane; that stretch reads GAGAKLSQNRVTGLIFEGYTTLIRG. A helical transmembrane segment spans residues 59–79; that stretch reads VPDLVLMLLIFYGLQIALNVV. Residues 80-87 are Periplasmic-facing; sequence TDSLGIDQ. Residues 88-108 form a helical membrane-spanning segment; sequence IDIDPMVAGIITLGFIYGAYF. Residues 109-152 lie on the Cytoplasmic side of the membrane; sequence TETFRGAFMAVPKGHIEAATAFGFTHGQTFRRIMFPAMMRYALP. Residues 153 to 173 form a helical membrane-spanning segment; it reads GIGNNWQVILKATALVSLLGL. At 174-194 the chain is on the periplasmic side; sequence EDVVKATQLAGKSTWEPFYFA. Residues 195–215 form a helical membrane-spanning segment; the sequence is VVCGLIYLVFTTVSNGVLLLL. Over 216 to 228 the chain is Cytoplasmic; sequence ERRYSVGVKRADL.

It belongs to the binding-protein-dependent transport system permease family. HisMQ subfamily. In terms of assembly, the HisPMQJ complex is composed of two ATP-binding proteins (HisP), two transmembrane proteins (HisM and HisQ) and a solute-binding protein (HisJ). The HisPMQ-ArgT complex is composed of two ATP-binding proteins (HisP), two transmembrane proteins (HisM and HisQ) and a solute-binding protein (ArgT).

The protein resides in the cell inner membrane. In terms of biological role, part of the ABC transporter complex HisPMQJ involved in histidine transport. Is also part of the ABC transporter complex HisPMQ-ArgT involved in lysine/arginine/ornithine transport. Probably responsible for the translocation of the substrate across the membrane. This Salmonella typhi protein is Histidine/lysine/arginine/ornithine transport system permease protein HisQ (hisQ).